The chain runs to 246 residues: Uridylate kinase (246 aa).

Lysine 18–glycine 21 provides a ligand contact to ATP. Residue glycine 60 coordinates UMP. ATP is bound by residues glycine 61 and arginine 65. Residues aspartate 80 and threonine 141–threonine 148 each bind UMP. Residues threonine 168, glutamine 169, tyrosine 174, and aspartate 177 each coordinate ATP.

This sequence belongs to the UMP kinase family. As to quaternary structure, homohexamer.

It localises to the cytoplasm. It carries out the reaction UMP + ATP = UDP + ADP. It participates in pyrimidine metabolism; CTP biosynthesis via de novo pathway; UDP from UMP (UMPK route): step 1/1. Inhibited by UTP. Functionally, catalyzes the reversible phosphorylation of UMP to UDP. This chain is Uridylate kinase, found in Gluconobacter oxydans (strain 621H) (Gluconobacter suboxydans).